The chain runs to 326 residues: MSLLLGQIVDALGGSLQGGSRDTPICRIAPLQAAGPGDLSVLSHPRYQQQLAASRAACVIVAPALRAAALARGACILAEQPYAYFARATQLWRQHHAPAPAPGVHASAVLDPTAQVHPTASIGPLCILERGAQVGAGSRLQARVTVGADCRIGARCLLHAGVVVGADGFGFAPEDGQWIKIEQLGAVRIGDDVEIGANTCIDRGTLQDTVIEDGVKLDNLIQIGHNVRIGKHSALAGCVGVAGSARIGAHCTIGGGAIVLGHLELADHVHISAATVVTRSLTRPGQYTGLFPIDDNARWEKNAATLKQLHSLRERIKALEQALKAA.

Residue histidine 225 is the Proton acceptor of the active site.

Belongs to the transferase hexapeptide repeat family. LpxD subfamily. As to quaternary structure, homotrimer.

The catalysed reaction is a UDP-3-O-[(3R)-3-hydroxyacyl]-alpha-D-glucosamine + a (3R)-hydroxyacyl-[ACP] = a UDP-2-N,3-O-bis[(3R)-3-hydroxyacyl]-alpha-D-glucosamine + holo-[ACP] + H(+). Its pathway is bacterial outer membrane biogenesis; LPS lipid A biosynthesis. In terms of biological role, catalyzes the N-acylation of UDP-3-O-acylglucosamine using 3-hydroxyacyl-ACP as the acyl donor. Is involved in the biosynthesis of lipid A, a phosphorylated glycolipid that anchors the lipopolysaccharide to the outer membrane of the cell. The polypeptide is UDP-3-O-acylglucosamine N-acyltransferase (Verminephrobacter eiseniae (strain EF01-2)).